The primary structure comprises 2193 residues: Highly reducing polyketide synthase VdtX (2193 aa).

One can recognise a Ketosynthase family 3 (KS3) domain in the interval Met-1–Ser-417. Residues Cys-170, His-306, and His-340 each act as for beta-ketoacyl synthase activity in the active site. Residues Val-513 to Phe-809 form a malonyl-CoA:ACP transacylase (MAT) domain region. Positions His-877 to Arg-1001 are N-terminal hotdog fold. The tract at residues His-877–Asn-1128 is dehydratase (DH) domain. In terms of domain architecture, PKS/mFAS DH spans His-877–Glu-1202. His-909 functions as the Proton acceptor; for dehydratase activity in the catalytic mechanism. The interval Ser-1032–Glu-1202 is C-terminal hotdog fold. Asp-1093 serves as the catalytic Proton donor; for dehydratase activity. Residues Asn-1256–Ala-1390 form a methyltransferase (CMet) domain region. Residues Gly-1575–Leu-1783 are enoyl reductase (ER) domain. Positions Ala-1807 to Gln-1981 are ketoreductase (KR) domain. The region spanning Pro-2102–Leu-2183 is the Carrier domain. An O-(pantetheine 4'-phosphoryl)serine modification is found at Ser-2143.

Its function is as follows. Highly reducing polyketide synthase; part of the gene cluster that mediates the biosynthesis of viriditoxin, one of the 'classical' secondary metabolites produced by fungi and that has antibacterial activity. The first step is performed by the polyketide synthase VdtA which condenses one acetyl-CoA and 6 malonyl-CoA units to form the heptaketide monomer backbone of viriditoxin. The product of VdtA is then O-methylated on C7 by the O-methyltransferase VdtC. The O-methyl group is important for the stereoselective coupling of the monomers at the final step of viriditoxin biosynthesis. The short-chain dehydrogenase/reductase VdtF is involved in the reduction of the C3-C4 double bond. The FAD-binding monooxygenase VdtE then converts the ketone group into a methyl-ester group to yield semi-viriditoxin. Finally, the laccase VdtB is involved in dimerization of 2 semi-viriditoxin molecules to yield the final viriditoxin. The non-catalytic carboxylesterase-like protein VdtD affects the stereochemistical outcome of the coupling. The highly reducing polyketide synthase VdtX is not involved in viriditoxin synthesis, but might possibly play a role in the production of additional metabolites not identified yet. The chain is Highly reducing polyketide synthase VdtX from Byssochlamys spectabilis (Paecilomyces variotii).